We begin with the raw amino-acid sequence, 537 residues long: O-phosphoserine--tRNA(Cys) ligase (537 aa).

Residues 186–188 (HMT), 231–233 (SAS), 273–274 (YY), and asparagine 317 contribute to the substrate site.

This sequence belongs to the class-II aminoacyl-tRNA synthetase family. O-phosphoseryl-tRNA(Cys) synthetase subfamily. In terms of assembly, homotetramer. Interacts with SepCysS.

The catalysed reaction is tRNA(Cys) + O-phospho-L-serine + ATP = O-phospho-L-seryl-tRNA(Cys) + AMP + diphosphate. In terms of biological role, catalyzes the attachment of O-phosphoserine (Sep) to tRNA(Cys). The sequence is that of O-phosphoserine--tRNA(Cys) ligase from Methanococcus vannielii (strain ATCC 35089 / DSM 1224 / JCM 13029 / OCM 148 / SB).